The sequence spans 75 residues: Disintegrin CTF-II (75 aa).

A Disintegrin domain is found at glutamate 1 to leucine 75. Cystine bridges form between cysteine 9–cysteine 24, cysteine 11–cysteine 19, cysteine 18–cysteine 41, cysteine 32–cysteine 38, cysteine 37–cysteine 62, and cysteine 50–cysteine 69. A Cell attachment site motif is present at residues arginine 54–aspartate 56.

The protein belongs to the venom metalloproteinase (M12B) family. P-II subfamily. P-IIa sub-subfamily. As to quaternary structure, monomer (disintegrin). As to expression, expressed by the venom gland.

The protein resides in the secreted. In terms of biological role, inhibits fibrinogen interaction with platelet receptors, and inhibits aggregation induced by ADP, thrombin, collagen and platelet-activating factor. Acts by binding to the alpha-IIb/beta-3 (ITGA2B/ITGB3) on the platelet surface. The sequence is that of Disintegrin CTF-II from Protobothrops flavoviridis (Habu).